Consider the following 400-residue polypeptide: Iron(III) enterobactin esterase (400 aa).

It belongs to the Fes family. Monomer.

It is found in the cytoplasm. The enzyme catalyses Fe(III)-enterobactin + 3 H2O + H(+) = Fe(III)-[N-(2,3-dihydroxybenzoyl)-L-serine] + 2 N-(2,3-dihydroxybenzoyl)-L-serine. It catalyses the reaction Fe(III)-enterobactin + H2O = Fe(III)-[N-(2,3-dihydroxybenzoyl)-L-serine]3 + H(+). The catalysed reaction is Fe(III)-[N-(2,3-dihydroxybenzoyl)-L-serine]3 + H2O + H(+) = Fe(III)-[N-(2,3-dihydroxybenzoyl)-L-serine]2 + N-(2,3-dihydroxybenzoyl)-L-serine. It carries out the reaction Fe(III)-[N-(2,3-dihydroxybenzoyl)-L-serine]2 + H2O + H(+) = Fe(III)-[N-(2,3-dihydroxybenzoyl)-L-serine] + N-(2,3-dihydroxybenzoyl)-L-serine. The enzyme catalyses enterobactin + 3 H2O = 3 N-(2,3-dihydroxybenzoyl)-L-serine + 2 H(+). Inhibited by N-ethylmaleimide. Functionally, catalyzes the hydrolysis of ferric enterobactin (Fe-Ent). Is responsible for the release of iron from ferric enterobactin. Also catalyzes the hydrolysis of iron-free enterobactin (Ent). Cleavage of ferric enterobactin results in a mixture of three hydrolysis products, 2,3-dihydroxybenzoylserine (DHBS), the linear dimer (DHBS)2 and the linear trimer (DHBS)3, while cleavage of iron-free enterobactin yields only the monomer. Hydrolysis of ferric enterobactin is less efficient than hydrolysis of unliganded enterobactin. It also cleaves the aluminum (III) complex at a rate similar to the ferric complex. This Escherichia coli (strain K12) protein is Iron(III) enterobactin esterase.